The chain runs to 215 residues: MAAPPARARADYDYLIKLLLIGDSGVGKSCLLLRFSDGSFTTSFITTIGIDFKIRTIELDGKRIKLQIWDTAGQERFRTITTAYYRGAMGILLVYDVTDESSFNNIRNWIRNIEQHASDNVNKILVGNKADMDESKRAVPTAKGQALADEYGIKFFETSAKTNLNVEEVFFSIARDIKQRLADSDTRQEAQPSITIKPADQSGNQAAAKSACCGS.

GTP-binding positions include Gly-22–Ser-29, Asp-70–Gln-74, and Asn-128–Asp-131. The interval Asp-183–Ser-215 is disordered. S-geranylgeranyl cysteine attachment occurs at residues Cys-212 and Cys-213.

It belongs to the small GTPase superfamily. Rab family.

It localises to the cell membrane. This chain is Ras-related protein RAB1BV (RAB1BV), found in Beta vulgaris (Sugar beet).